We begin with the raw amino-acid sequence, 562 residues long: Exonuclease subunit 2 (562 aa).

36–43 (GKNGGGKS) provides a ligand contact to ATP.

This sequence to phage T5 protein D13 and to yeast RAD52. Consists of two subunits: Gp47 and Gp46.

In terms of biological role, exonuclease involved in phage DNA recombination, replication, and repair. The protein is Exonuclease subunit 2 (46) of Escherichia phage RB69 (Bacteriophage RB69).